The chain runs to 109 residues: Heterogeneous nuclear ribonucleoprotein-like protein HD40 (109 aa).

Positions 1–36 are disordered; the sequence is EEVSNGQEHTEGMXQGEXNXIXVEEHHEGEKNSHLV. A compositionally biased stretch (basic and acidic residues) spans 23-36; sequence VEEHHEGEKNSHLV. The RRM domain maps to 40–50; sequence EEKKLFVGALS. 2 positions are modified to asymmetric dimethylarginine: Arg-102 and Arg-105.

The protein resides in the cytoplasm. It is found in the nucleus. The chain is Heterogeneous nuclear ribonucleoprotein-like protein HD40 from Artemia salina (Brine shrimp).